A 353-amino-acid chain; its full sequence is S-adenosylmethionine:tRNA ribosyltransferase-isomerase (353 aa).

This sequence belongs to the QueA family. As to quaternary structure, monomer.

It is found in the cytoplasm. It carries out the reaction 7-aminomethyl-7-carbaguanosine(34) in tRNA + S-adenosyl-L-methionine = epoxyqueuosine(34) in tRNA + adenine + L-methionine + 2 H(+). It functions in the pathway tRNA modification; tRNA-queuosine biosynthesis. Functionally, transfers and isomerizes the ribose moiety from AdoMet to the 7-aminomethyl group of 7-deazaguanine (preQ1-tRNA) to give epoxyqueuosine (oQ-tRNA). The chain is S-adenosylmethionine:tRNA ribosyltransferase-isomerase from Marinomonas sp. (strain MWYL1).